Consider the following 710-residue polypeptide: Methionine--tRNA ligase (710 aa).

The 'HIGH' region signature appears at 16–26 (PYANGAFHIGH). Zn(2+)-binding residues include C147, C150, C160, and C163. The 'KMSKS' region motif lies at 350 to 354 (KMSKS). K353 lines the ATP pocket. One can recognise a tRNA-binding domain in the interval 604 to 710 (DFAKIDLRIA…PGAEPGMRVG (107 aa)).

It belongs to the class-I aminoacyl-tRNA synthetase family. MetG type 1 subfamily. Homodimer. The cofactor is Zn(2+).

The protein resides in the cytoplasm. The catalysed reaction is tRNA(Met) + L-methionine + ATP = L-methionyl-tRNA(Met) + AMP + diphosphate. Functionally, is required not only for elongation of protein synthesis but also for the initiation of all mRNA translation through initiator tRNA(fMet) aminoacylation. This is Methionine--tRNA ligase from Herminiimonas arsenicoxydans.